The sequence spans 507 residues: ATP synthase subunit alpha (507 aa).

An ATP-binding site is contributed by 169–176 (GDRQTGKT).

It belongs to the ATPase alpha/beta chains family. F-type ATPases have 2 components, CF(1) - the catalytic core - and CF(0) - the membrane proton channel. CF(1) has five subunits: alpha(3), beta(3), gamma(1), delta(1), epsilon(1). CF(0) has three main subunits: a(1), b(2) and c(9-12). The alpha and beta chains form an alternating ring which encloses part of the gamma chain. CF(1) is attached to CF(0) by a central stalk formed by the gamma and epsilon chains, while a peripheral stalk is formed by the delta and b chains.

The protein localises to the cell membrane. The enzyme catalyses ATP + H2O + 4 H(+)(in) = ADP + phosphate + 5 H(+)(out). Its function is as follows. Produces ATP from ADP in the presence of a proton gradient across the membrane. The alpha chain is a regulatory subunit. This Desulforudis audaxviator (strain MP104C) protein is ATP synthase subunit alpha.